A 1436-amino-acid polypeptide reads, in one-letter code: Antigen WC1.1 (1436 aa).

A signal peptide spans 1–25 (MALGRHLSLRGLCVLLLGTMVGGQA). SRCR domains lie at 28–131 (LRLK…VVCS), 134–234 (VRLA…VVCS), and 239–340 (VRLM…VICS). 2 disulfide bridges follow: Cys66–Cys130 and Cys97–Cys107. An N-linked (GlcNAc...) asparagine glycan is attached at Asn162. 2 disulfides stabilise this stretch: Cys172-Cys233 and Cys203-Cys213. 2 N-linked (GlcNAc...) asparagine glycosylation sites follow: Asn244 and Asn256. Disulfide bonds link Cys265/Cys329, Cys278/Cys339, and Cys309/Cys319. 3 N-linked (GlcNAc...) asparagine glycosylation sites follow: Asn351, Asn424, and Asn444. 5 consecutive SRCR domains span residues 376 to 476 (LRLV…VICS), 481 to 581 (LRMV…IWCA), 586 to 686 (IRLV…VICS), 689 to 789 (VRLA…VVCS), and 794 to 895 (VQLM…VICS). 3 cysteine pairs are disulfide-bonded: Cys401-Cys465, Cys414-Cys475, and Cys445-Cys455. N-linked (GlcNAc...) asparagine glycans are attached at residues Asn499 and Asn531. Intrachain disulfides connect Cys506-Cys570, Cys519-Cys580, Cys550-Cys560, Cys611-Cys675, Cys624-Cys685, and Cys655-Cys665. Asn717 is a glycosylation site (N-linked (GlcNAc...) asparagine). Disulfide bonds link Cys727–Cys788 and Cys758–Cys768. N-linked (GlcNAc...) asparagine glycosylation is present at Asn799. 3 disulfides stabilise this stretch: Cys820–Cys884, Cys833–Cys894, and Cys864–Cys874. Residues Asn897, Asn979, and Asn999 are each glycosylated (N-linked (GlcNAc...) asparagine). SRCR domains follow at residues 931 to 1031 (LRLV…VICS), 1036 to 1136 (LRMV…ISCE), and 1155 to 1255 (LRLR…VRCS). 3 cysteine pairs are disulfide-bonded: Cys956-Cys1020, Cys969-Cys1030, and Cys1000-Cys1010. N-linked (GlcNAc...) asparagine glycosylation is found at Asn1054 and Asn1086. 3 disulfide bridges follow: Cys1061-Cys1125, Cys1074-Cys1135, and Cys1105-Cys1115. Residues Asn1173 and Asn1214 are each glycosylated (N-linked (GlcNAc...) asparagine). Cystine bridges form between Cys1180–Cys1244, Cys1193–Cys1254, and Cys1224–Cys1234. A disordered region spans residues 1337-1410 (EGLGSPDQMT…PGEGEESFWL (74 aa)). The span at 1348-1358 (VPDENYDDAEE) shows a compositional bias: acidic residues. The segment covering 1384–1393 (RSSQTGSFLN) has biased composition (polar residues). Asn1393 carries N-linked (GlcNAc...) asparagine glycosylation.

As to expression, expressed on subsets of CD4-CD8- gamma delta T lymphocytes.

It localises to the secreted. The chain is Antigen WC1.1 from Bos taurus (Bovine).